The chain runs to 468 residues: A-type ATP synthase subunit B (468 aa).

The protein belongs to the ATPase alpha/beta chains family. In terms of assembly, has multiple subunits with at least A(3), B(3), C, D, E, F, H, I and proteolipid K(x).

The protein resides in the cell membrane. In terms of biological role, component of the A-type ATP synthase that produces ATP from ADP in the presence of a proton gradient across the membrane. The B chain is a regulatory subunit. This is A-type ATP synthase subunit B from Haloferax volcanii (strain ATCC 29605 / DSM 3757 / JCM 8879 / NBRC 14742 / NCIMB 2012 / VKM B-1768 / DS2) (Halobacterium volcanii).